The primary structure comprises 94 residues: Conotoxin Cal22a (94 aa).

Residues 1 to 24 form the signal peptide; it reads MMSTKGITLFLCLLLLALATSVNG. Positions 25–44 are excised as a propeptide; it reads GQGTRRSRMTRALHGGRPSA.

In terms of processing, contains 4 disulfide bonds. As to expression, expressed by the venom duct.

The protein localises to the secreted. In terms of biological role, probable neurotoxin with unknown target. Possibly targets ion channels. The chain is Conotoxin Cal22a from Californiconus californicus (California cone).